The sequence spans 594 residues: MVDIRKSLFFIIFFIFYNYVNSQKAINSDAFCQKKTITSICDPYLFNTDSIYIFNSTTTQESIELEIKRLLGFFSMLPSTCQVPSTYRLICNQYFQTCVPISKTDNSSTIAIPLRPCRESCDYGNGICGTQSITPCTGTFTEPTIYKFPVTSNVFDLSSLGGPSNYDLQCLNIDTMKAGNLNGTYISNNETVIVNQTCVYPLVYRNSTNREDDIKKGYQYLTETSDCLLPCPVPFFTENEWYQFKDLTTVTGVISFVCIFFNIFIYGFLNKKHDRHTIGILCLSFSLWCCMLSDLIVASSPDYSLVCPEPGRFARIHDSRCVANGIIFQWGAVCTTMFWSAMAIDLYLVIKKLSLPAFTVKYFVAAIFTLALLFTTVPLAWDDYGYGFGGVGCWIMSNSVQNGCFWIPMLICLLIGAVSICLIIYEIVKVFKNVGRSGISIILANARLFGIVSFIFIEYIYLFVYHFWVQENTEKFTQNITDWVICVQTTGSSDGCPLPKAVPYATQFIFLFFLRLLGIEVCIFYGINSRSKNIILESDLVNNKYFKAIRSKISSVGATSTTKNNTSTNNTSDQFNTSMFSVEVSKNGGDDDDL.

The first 22 residues, 1 to 22 (MVDIRKSLFFIIFFIFYNYVNS), serve as a signal peptide directing secretion. The Extracellular segment spans residues 23-248 (QKAINSDAFC…NEWYQFKDLT (226 aa)). Residues 27–173 (NSDAFCQKKT…SNYDLQCLNI (147 aa)) enclose the FZ domain. Intrachain disulfides connect C32/C98 and C41/C91. 2 N-linked (GlcNAc...) asparagine glycosylation sites follow: N55 and N106. C117 and C170 are oxidised to a cystine. N-linked (GlcNAc...) asparagine glycosylation is found at N182, N189, N195, and N206. The helical transmembrane segment at 249 to 269 (TVTGVISFVCIFFNIFIYGFL) threads the bilayer. The Cytoplasmic portion of the chain corresponds to 270–277 (NKKHDRHT). The chain crosses the membrane as a helical span at residues 278–298 (IGILCLSFSLWCCMLSDLIVA). Topologically, residues 299–329 (SSPDYSLVCPEPGRFARIHDSRCVANGIIFQ) are extracellular. Residues 330–350 (WGAVCTTMFWSAMAIDLYLVI) form a helical membrane-spanning segment. At 351-361 (KKLSLPAFTVK) the chain is on the cytoplasmic side. A helical membrane pass occupies residues 362–382 (YFVAAIFTLALLFTTVPLAWD). Residues 383-403 (DYGYGFGGVGCWIMSNSVQNG) lie on the Extracellular side of the membrane. The helical transmembrane segment at 404–424 (CFWIPMLICLLIGAVSICLII) threads the bilayer. The Cytoplasmic portion of the chain corresponds to 425-448 (YEIVKVFKNVGRSGISIILANARL). The chain crosses the membrane as a helical span at residues 449–469 (FGIVSFIFIEYIYLFVYHFWV). The Extracellular portion of the chain corresponds to 470 to 507 (QENTEKFTQNITDWVICVQTTGSSDGCPLPKAVPYATQ). Residue N479 is glycosylated (N-linked (GlcNAc...) asparagine). The helical transmembrane segment at 508 to 528 (FIFLFFLRLLGIEVCIFYGIN) threads the bilayer. Residues 529-594 (SRSKNIILES…SKNGGDDDDL (66 aa)) lie on the Cytoplasmic side of the membrane.

It belongs to the G-protein coupled receptor Fz/Smo family.

It is found in the membrane. This chain is Frizzled and smoothened-like protein A (fslA), found in Dictyostelium discoideum (Social amoeba).